Reading from the N-terminus, the 210-residue chain is Large ribosomal subunit protein uL22 (210 aa).

The disordered stretch occupies residues 123–210 (NEMTSKETVK…TKSTKKEGSK (88 aa)). The span at 126-157 (TSKETVKEPAKKPSAKVEKPAEAKAPKQETST) shows a compositional bias: basic and acidic residues. Over residues 158 to 185 (KKPTTTTESKPKTSKAPAQKQAAKVAKP) the composition is skewed to low complexity.

It belongs to the universal ribosomal protein uL22 family. In terms of assembly, part of the 50S ribosomal subunit.

This protein binds specifically to 23S rRNA; its binding is stimulated by other ribosomal proteins, e.g. L4, L17, and L20. It is important during the early stages of 50S assembly. It makes multiple contacts with different domains of the 23S rRNA in the assembled 50S subunit and ribosome. In terms of biological role, the globular domain of the protein is located near the polypeptide exit tunnel on the outside of the subunit, while an extended beta-hairpin is found that lines the wall of the exit tunnel in the center of the 70S ribosome. This Metamycoplasma arthritidis (strain 158L3-1) (Mycoplasma arthritidis) protein is Large ribosomal subunit protein uL22.